A 342-amino-acid chain; its full sequence is tRNA N6-adenosine threonylcarbamoyltransferase (342 aa).

The Fe cation site is built by His-111 and His-115. Residues 134–138, Asp-167, Gly-180, and Asn-277 each bind substrate; that span reads LVSGG. Position 305 (Asp-305) interacts with Fe cation.

This sequence belongs to the KAE1 / TsaD family. Fe(2+) is required as a cofactor.

It localises to the cytoplasm. It catalyses the reaction L-threonylcarbamoyladenylate + adenosine(37) in tRNA = N(6)-L-threonylcarbamoyladenosine(37) in tRNA + AMP + H(+). Required for the formation of a threonylcarbamoyl group on adenosine at position 37 (t(6)A37) in tRNAs that read codons beginning with adenine. Is involved in the transfer of the threonylcarbamoyl moiety of threonylcarbamoyl-AMP (TC-AMP) to the N6 group of A37, together with TsaE and TsaB. TsaD likely plays a direct catalytic role in this reaction. The sequence is that of tRNA N6-adenosine threonylcarbamoyltransferase from Haemophilus influenzae (strain ATCC 51907 / DSM 11121 / KW20 / Rd).